We begin with the raw amino-acid sequence, 346 residues long: Phosphoribosylformylglycinamidine cyclo-ligase (346 aa).

Belongs to the AIR synthase family.

It is found in the cytoplasm. The catalysed reaction is 2-formamido-N(1)-(5-O-phospho-beta-D-ribosyl)acetamidine + ATP = 5-amino-1-(5-phospho-beta-D-ribosyl)imidazole + ADP + phosphate + H(+). The protein operates within purine metabolism; IMP biosynthesis via de novo pathway; 5-amino-1-(5-phospho-D-ribosyl)imidazole from N(2)-formyl-N(1)-(5-phospho-D-ribosyl)glycinamide: step 2/2. In Vibrio vulnificus (strain YJ016), this protein is Phosphoribosylformylglycinamidine cyclo-ligase.